A 474-amino-acid polypeptide reads, in one-letter code: MQLSSYQDLRSELISRRITCEKVVLDYLERIDRHRDDNIYITVFHEQAVEKARKLDKKLSEGGLPGKLFGMPMAIKDNISIKGAGLTCASRILENYESVYDATAVQRLEAEDAVFLGKTNMDEFAMGSSNENSAFGAVPNPFDKTRVPGGSSGGSAAAVAAGLALAALGSDTGGSVRQPAGFCDIVGLKPTYGRISRYGLVAFASSFDQIGVLARNCDDASLVLGIMAGKDEHDATSSHRDVPDYAADMAAVRVEGLKIGVPKEYFHESLNREVGEIVRAKLHELRDKGAELVDITLPESDYAIAAYYILVTAEASSNLARFDGARYGYRSSRAEDVLAMYVNSRTEGFGKEVKRRIMLGTYVLSAGYYDTYYKKAQQVRRVFQDRYREALEKVDVIAGPTSPFPPFSIGEKMDDPLEMYLADVFTVPASIVGMPAVSVPVGMDSRNLPVGMHLICDFFEEGKLMGIARHLQRR.

Active-site charge relay system residues include Lys-76 and Ser-151. Ser-175 acts as the Acyl-ester intermediate in catalysis.

It belongs to the amidase family. GatA subfamily. Heterotrimer of A, B and C subunits.

The catalysed reaction is L-glutamyl-tRNA(Gln) + L-glutamine + ATP + H2O = L-glutaminyl-tRNA(Gln) + L-glutamate + ADP + phosphate + H(+). Its function is as follows. Allows the formation of correctly charged Gln-tRNA(Gln) through the transamidation of misacylated Glu-tRNA(Gln) in organisms which lack glutaminyl-tRNA synthetase. The reaction takes place in the presence of glutamine and ATP through an activated gamma-phospho-Glu-tRNA(Gln). In Chlorobium limicola (strain DSM 245 / NBRC 103803 / 6330), this protein is Glutamyl-tRNA(Gln) amidotransferase subunit A.